The sequence spans 400 residues: Casein kinase I homolog hhp2 (400 aa).

The 267-residue stretch at 12–278 (YRIGRKIGSG…YLRKLFRDLL (267 aa)) folds into the Protein kinase domain. ATP is bound by residues 18-26 (IGSGSFGQI) and K41. The active-site Proton acceptor is the D131. A disordered region spans residues 330–352 (PNYSSIPLPAERNPKTPQSFSTN).

It belongs to the protein kinase superfamily. CK1 Ser/Thr protein kinase family. Casein kinase I subfamily.

It is found in the nucleus. The enzyme catalyses L-seryl-[protein] + ATP = O-phospho-L-seryl-[protein] + ADP + H(+). It carries out the reaction L-threonyl-[protein] + ATP = O-phospho-L-threonyl-[protein] + ADP + H(+). In terms of biological role, involved in DNA repair. May regulate the activity of protein(s) involved in double strand break repair caused by gamma rays. The chain is Casein kinase I homolog hhp2 (hhp2) from Schizosaccharomyces pombe (strain 972 / ATCC 24843) (Fission yeast).